Reading from the N-terminus, the 292-residue chain is 33 kDa chaperonin (292 aa).

2 disulfides stabilise this stretch: cysteine 238-cysteine 240 and cysteine 271-cysteine 274.

It belongs to the HSP33 family. Under oxidizing conditions two disulfide bonds are formed involving the reactive cysteines. Under reducing conditions zinc is bound to the reactive cysteines and the protein is inactive.

The protein resides in the cytoplasm. Functionally, redox regulated molecular chaperone. Protects both thermally unfolding and oxidatively damaged proteins from irreversible aggregation. Plays an important role in the bacterial defense system toward oxidative stress. In Latilactobacillus sakei subsp. sakei (strain 23K) (Lactobacillus sakei subsp. sakei), this protein is 33 kDa chaperonin.